Reading from the N-terminus, the 398-residue chain is Ubiquitin carboxyl-terminal hydrolase 17-like protein 6 (398 aa).

The region spanning 80 to 375 is the USP domain; the sequence is AGLQNMGNTC…QAYVLFYIQK (296 aa). Cysteine 89 functions as the Nucleophile in the catalytic mechanism. Catalysis depends on histidine 334, which acts as the Proton acceptor.

This sequence belongs to the peptidase C19 family. USP17 subfamily.

It localises to the nucleus. The protein resides in the cytoplasm. It catalyses the reaction Thiol-dependent hydrolysis of ester, thioester, amide, peptide and isopeptide bonds formed by the C-terminal Gly of ubiquitin (a 76-residue protein attached to proteins as an intracellular targeting signal).. Its function is as follows. Deubiquitinating enzyme that removes conjugated ubiquitin from specific proteins to regulate different cellular processes that may include cell proliferation, progression through the cell cycle, cell migration, and the cellular response to viral infection. Seems to be non-functional in the regulation of apoptosis. This chain is Ubiquitin carboxyl-terminal hydrolase 17-like protein 6 (USP17L6P), found in Homo sapiens (Human).